Reading from the N-terminus, the 483-residue chain is ATP-dependent RNA helicase dbp-5 (483 aa).

The disordered stretch occupies residues 1–47 (MADLASRITKPDEAPAAAPEAAPVSAPASEEPKAPENETSIEESQSN). Positions 14–29 (APAAAPEAAPVSAPAS) are enriched in low complexity. Residues 74 to 102 (SSFDELGLPEAVNRGLLAINFKKPSKVQE) carry the Q motif motif. A Helicase ATP-binding domain is found at 107-276 (LMLSDPPRNM…ERFAPNANQM (170 aa)). 120 to 127 (SQSGTGKT) lines the ATP pocket. Positions 223-226 (DEAD) match the DEAD box motif. In terms of domain architecture, Helicase C-terminal spans 304 to 455 (ILCKLYGLMT…LIQLNPNDLD (152 aa)).

This sequence belongs to the DEAD box helicase family. DDX19/DBP5 subfamily. Associates with the nuclear pore complex.

Its subcellular location is the cytoplasm. The protein resides in the nucleus. It localises to the nuclear pore complex. It is found in the nucleus membrane. The enzyme catalyses ATP + H2O = ADP + phosphate + H(+). In terms of biological role, ATP-dependent RNA helicase associated with the nuclear pore complex and essential for mRNA export from the nucleus. May participate in a terminal step of mRNA export through the removal of proteins that accompany mRNA through the nucleopore complex. May also be involved in early transcription. This chain is ATP-dependent RNA helicase dbp-5 (dbp-5), found in Neurospora crassa (strain ATCC 24698 / 74-OR23-1A / CBS 708.71 / DSM 1257 / FGSC 987).